The sequence spans 482 residues: Protein translocase subunit SecY (482 aa).

The interval 1–22 (MVIKKPANKVDKKSTFKSSNKK) is disordered. 10 consecutive transmembrane segments (helical) span residues 41 to 61 (ILFT…TVPG), 92 to 112 (FSIL…VQLL), 137 to 157 (LTKI…IFTL), 177 to 197 (AFYY…MLWI), 201 to 221 (ITIK…IIIS), 243 to 263 (IFFS…LVIL), 303 to 323 (VIPV…SQII), 342 to 362 (FNTW…TFLY), 405 to 425 (VVGS…SKLT), and 426 to 446 (QLPS…SVAI).

This sequence belongs to the SecY/SEC61-alpha family. In terms of assembly, component of the Sec protein translocase complex. Heterotrimer consisting of SecY, SecE and SecG subunits. The heterotrimers can form oligomers, although 1 heterotrimer is thought to be able to translocate proteins. Interacts with the ribosome. Interacts with SecDF, and other proteins may be involved. Interacts with SecA.

The protein resides in the cell membrane. Its function is as follows. The central subunit of the protein translocation channel SecYEG. Consists of two halves formed by TMs 1-5 and 6-10. These two domains form a lateral gate at the front which open onto the bilayer between TMs 2 and 7, and are clamped together by SecE at the back. The channel is closed by both a pore ring composed of hydrophobic SecY resides and a short helix (helix 2A) on the extracellular side of the membrane which forms a plug. The plug probably moves laterally to allow the channel to open. The ring and the pore may move independently. This chain is Protein translocase subunit SecY, found in Mycoplasma capricolum subsp. capricolum (strain California kid / ATCC 27343 / NCTC 10154).